Consider the following 206-residue polypeptide: Ribosomal RNA large subunit methyltransferase E (206 aa).

S-adenosyl-L-methionine-binding residues include Gly-61, Trp-63, Asp-81, Asp-97, and Asp-122. Lys-162 (proton acceptor) is an active-site residue.

This sequence belongs to the class I-like SAM-binding methyltransferase superfamily. RNA methyltransferase RlmE family.

It is found in the cytoplasm. The enzyme catalyses uridine(2552) in 23S rRNA + S-adenosyl-L-methionine = 2'-O-methyluridine(2552) in 23S rRNA + S-adenosyl-L-homocysteine + H(+). Specifically methylates the uridine in position 2552 of 23S rRNA at the 2'-O position of the ribose in the fully assembled 50S ribosomal subunit. In Neisseria meningitidis serogroup C (strain 053442), this protein is Ribosomal RNA large subunit methyltransferase E.